The primary structure comprises 336 residues: Atypical chemokine receptor 1 (336 aa).

The Extracellular segment spans residues Met1–Pro63. N-linked (GlcNAc...) asparagine glycans are attached at residues Asn16, Asn27, and Asn33. 2 disulfide bridges follow: Cys51–Cys276 and Cys129–Cys195. The chain crosses the membrane as a helical span at residues Phe64–Phe84. At Arg85–Gly95 the chain is on the cytoplasmic side. A helical transmembrane segment spans residues Trp96–Leu116. Residues Ala117–Cys129 lie on the Extracellular side of the membrane. Residues Ser130–Leu153 traverse the membrane as a helical segment. Residues Gly154 to Thr166 lie on the Cytoplasmic side of the membrane. The helical transmembrane segment at Leu167 to Ala187 threads the bilayer. The Extracellular portion of the chain corresponds to Ser188 to Gln207. A helical membrane pass occupies residues Ala208 to Ala228. At Lys229 to Asn244 the chain is on the cytoplasmic side. A helical transmembrane segment spans residues Ile245–Leu265. Residues Val266–Asn287 lie on the Extracellular side of the membrane. The helical transmembrane segment at Leu288–Tyr308 threads the bilayer. Topologically, residues His309–Ser336 are cytoplasmic.

Belongs to the G-protein coupled receptor 1 family. Atypical chemokine receptor subfamily.

The protein resides in the early endosome. The protein localises to the recycling endosome. Its subcellular location is the membrane. Functionally, atypical chemokine receptor that controls chemokine levels and localization via high-affinity chemokine binding that is uncoupled from classic ligand-driven signal transduction cascades, resulting instead in chemokine sequestration, degradation, or transcytosis. Also known as interceptor (internalizing receptor) or chemokine-scavenging receptor or chemokine decoy receptor. Has a promiscuous chemokine-binding profile, interacting with inflammatory chemokines of both the CXC and the CC subfamilies but not with homeostatic chemokines. Acts as a receptor for chemokines including CCL2, CCL5, CCL7, CCL11, CCL13, CCL14, CCL17, CXCL5, CXCL6, IL8/CXCL8, CXCL11, GRO, RANTES, MCP-1 and TARC. May regulate chemokine bioavailability and, consequently, leukocyte recruitment through two distinct mechanisms: when expressed in endothelial cells, it sustains the abluminal to luminal transcytosis of tissue-derived chemokines and their subsequent presentation to circulating leukocytes; when expressed in erythrocytes, serves as blood reservoir of cognate chemokines but also as a chemokine sink, buffering potential surges in plasma chemokine levels. This Gorilla gorilla gorilla (Western lowland gorilla) protein is Atypical chemokine receptor 1 (ACKR1).